A 181-amino-acid chain; its full sequence is Large ribosomal subunit protein uL5 (181 aa).

This sequence belongs to the universal ribosomal protein uL5 family. Part of the 50S ribosomal subunit; part of the 5S rRNA/L5/L18/L25 subcomplex. Contacts the 5S rRNA and the P site tRNA. Forms a bridge to the 30S subunit in the 70S ribosome.

Its function is as follows. This is one of the proteins that bind and probably mediate the attachment of the 5S RNA into the large ribosomal subunit, where it forms part of the central protuberance. In the 70S ribosome it contacts protein S13 of the 30S subunit (bridge B1b), connecting the 2 subunits; this bridge is implicated in subunit movement. Contacts the P site tRNA; the 5S rRNA and some of its associated proteins might help stabilize positioning of ribosome-bound tRNAs. The polypeptide is Large ribosomal subunit protein uL5 (Nitrosococcus oceani (strain ATCC 19707 / BCRC 17464 / JCM 30415 / NCIMB 11848 / C-107)).